The following is a 127-amino-acid chain: Small ribosomal subunit protein uS11 (127 aa).

This sequence belongs to the universal ribosomal protein uS11 family. Part of the 30S ribosomal subunit. Interacts with proteins S7 and S18. Binds to IF-3.

Located on the platform of the 30S subunit, it bridges several disparate RNA helices of the 16S rRNA. Forms part of the Shine-Dalgarno cleft in the 70S ribosome. In Streptococcus thermophilus (strain CNRZ 1066), this protein is Small ribosomal subunit protein uS11.